The following is a 508-amino-acid chain: MMKSLFLFSAHPKPPPLPPSPHLRKLLRLTASASTSASSPPRAGCSRGPAHARPRPSPRPSPSSSLYARPSLLDMERGRAARRADVDAFLASLGVDPGELAGLELPATVDVMRERVEFLHSLDLSNEDLAAYPLALGCSVRKNMVPVLDYLGKLGVRQDALPDLLRRYPQVLHASVVVDLAPVVKYLQGMDVRPHDVPRVLERYPELLGFKLEGTMSTSIAYLVGIGVARRQVGSVITRFPEVLGMRVGKIIKPFVEHLEGIGLQRLAIARIIEKKPYVLGFGLEDKVKPNIEALLEFGVRKEALAFIVAQYPDILGIELRDKLATQQSLFESSILVSSEDFGRVIERMPQAISLGRTAVLKHVNFLTSCGFLLSQVSKMVVACPQLLALNMDIMKMSFEYFQNEMERDLEELVEFPAFFTYGLESTVRPRHEMVAKKGFTCSLAWLLNCSDAKFDERMKYDTIGIEEMEVDNSFDTNTLSERVEDEVEDEDLDEDSDYDSTDDEFIE.

The transit peptide at 1–79 (MMKSLFLFSA…PSLLDMERGR (79 aa)) directs the protein to the chloroplast. Positions 28–49 (RLTASASTSASSPPRAGCSRGP) are enriched in low complexity. Disordered stretches follow at residues 28–69 (RLTA…LYAR) and 475–508 (FDTN…EFIE). Over residues 484–508 (VEDEVEDEDLDEDSDYDSTDDEFIE) the composition is skewed to acidic residues.

Belongs to the mTERF family.

It is found in the plastid. Its subcellular location is the chloroplast stroma. Transcription termination factor required for processing and steady-state levels of plastid transcripts. Required for splicing of the chloroplastic group II intron. Required for the accumulation of 16S and 23S ribosomes. This Oryza sativa subsp. japonica (Rice) protein is Transcription termination factor MTERF4, chloroplastic.